We begin with the raw amino-acid sequence, 494 residues long: Calmodulin-binding protein 60 A (494 aa).

Positions 1-62 are calmodulin-binding; the sequence is MRIPTYDFGS…AGIKWICEKE (62 aa). Residues 132-252 are DNA-binding; sequence VSDWTDEDIR…AFHRRLNLSN (121 aa).

It belongs to the plant ACBP60 protein family. As to quaternary structure, interacts with calmodulin (CaM). Expressed in stems, flowers and root.

It is found in the nucleus. Its function is as follows. Transcription activator that binds DNA in a sequence-specific manner, likely 5'-GAAATTTTGG-3', to promote the expression of target genes. This chain is Calmodulin-binding protein 60 A, found in Arabidopsis thaliana (Mouse-ear cress).